We begin with the raw amino-acid sequence, 163 residues long: MFRRLIGVVVATALLTFQLIVGSATALELDEATRTVPLNAQGDTVTLSLKQVKEGKRLFQYACAQCHVGGVTKTNQNVGLEPEALALATPNRNNIEGLVDYMKNPTTYDGVEEISEIHPSLKSADIFTAMRNLTDKDLESIAGHILLQPKILGDKWGGGKIYY.

The first 26 residues, 1 to 26, serve as a signal peptide directing secretion; sequence MFRRLIGVVVATALLTFQLIVGSATA. Positions 63, 66, 67, and 118 each coordinate heme c.

This sequence belongs to the cytochrome c family. PsbV subfamily. In terms of assembly, PSII is composed of 1 copy each of membrane proteins PsbA, PsbB, PsbC, PsbD, PsbE, PsbF, PsbH, PsbI, PsbJ, PsbK, PsbL, PsbM, PsbT, PsbX, PsbY, PsbZ, Psb30/Ycf12, peripheral proteins PsbO, CyanoQ (PsbQ), PsbU, PsbV and a large number of cofactors. It forms dimeric complexes. It depends on heme c as a cofactor.

The protein resides in the cellular thylakoid membrane. Functionally, one of the extrinsic, lumenal subunits of photosystem II (PSII). PSII is a light-driven water plastoquinone oxidoreductase, using light energy to abstract electrons from H(2)O, generating a proton gradient subsequently used for ATP formation. The extrinsic proteins stabilize the structure of photosystem II oxygen-evolving complex (OEC), the ion environment of oxygen evolution and protect the OEC against heat-induced inactivation. Low-potential cytochrome c that plays a role in the OEC of PSII. This is Photosystem II extrinsic protein V from Nostoc sp. (strain PCC 7120 / SAG 25.82 / UTEX 2576).